We begin with the raw amino-acid sequence, 590 residues long: Glutamine--fructose-6-phosphate aminotransferase [isomerizing] (590 aa).

The active-site Nucleophile; for GATase activity is cysteine 2. In terms of domain architecture, Glutamine amidotransferase type-2 spans 2–219 (CGIVACILKD…DGEMVILDGD (218 aa)). SIS domains lie at 277-415 (VVEE…PELM) and 438-580 (LAAT…PDKP). Lysine 585 functions as the For Fru-6P isomerization activity in the catalytic mechanism.

Homodimer.

Its subcellular location is the cytoplasm. It carries out the reaction D-fructose 6-phosphate + L-glutamine = D-glucosamine 6-phosphate + L-glutamate. Functionally, catalyzes the first step in hexosamine metabolism, converting fructose-6P into glucosamine-6P using glutamine as a nitrogen source. The protein is Glutamine--fructose-6-phosphate aminotransferase [isomerizing] of Methanothermobacter thermautotrophicus (strain ATCC 29096 / DSM 1053 / JCM 10044 / NBRC 100330 / Delta H) (Methanobacterium thermoautotrophicum).